The sequence spans 417 residues: uncharacterized protein (417 aa).

The next 4 membrane-spanning stretches (helical) occupy residues 87–107 (LVVA…GYWI), 130–150 (IAGT…TPSV), 177–197 (FFIT…VYAA), and 202–222 (IIDT…LWPD). Over residues 366 to 398 (APSAPAAAEHKATSSSNSSNSSPGSSNPTTAPT) the composition is skewed to low complexity. The interval 366–417 (APSAPAAAEHKATSSSNSSNSSPGSSNPTTAPTDKFRTGSPKTQPEKISAFW) is disordered.

The protein belongs to the YccS/YhfK family.

Its subcellular location is the cell membrane. This is an uncharacterized protein from Neisseria gonorrhoeae.